The chain runs to 647 residues: 1-deoxy-D-xylulose-5-phosphate synthase (647 aa).

Thiamine diphosphate contacts are provided by residues His72 and 113-115; that span reads GHA. Asp144 lines the Mg(2+) pocket. Residues 145–146, Asn174, Tyr287, and Glu370 each bind thiamine diphosphate; that span reads GA. Residue Asn174 coordinates Mg(2+).

Belongs to the transketolase family. DXPS subfamily. As to quaternary structure, homodimer. Mg(2+) serves as cofactor. The cofactor is thiamine diphosphate.

The enzyme catalyses D-glyceraldehyde 3-phosphate + pyruvate + H(+) = 1-deoxy-D-xylulose 5-phosphate + CO2. It participates in metabolic intermediate biosynthesis; 1-deoxy-D-xylulose 5-phosphate biosynthesis; 1-deoxy-D-xylulose 5-phosphate from D-glyceraldehyde 3-phosphate and pyruvate: step 1/1. Functionally, catalyzes the acyloin condensation reaction between C atoms 2 and 3 of pyruvate and glyceraldehyde 3-phosphate to yield 1-deoxy-D-xylulose-5-phosphate (DXP). The polypeptide is 1-deoxy-D-xylulose-5-phosphate synthase (Synechococcus sp. (strain WH7803)).